The primary structure comprises 450 residues: tRNA-2-methylthio-N(6)-dimethylallyladenosine synthase (450 aa).

The region spanning Lys7–Gly127 is the MTTase N-terminal domain. The [4Fe-4S] cluster site is built by Cys16, Cys52, Cys90, Cys168, Cys172, and Cys175. The Radical SAM core domain maps to Ile154–Gly388. One can recognise a TRAM domain in the interval Ser389–Ala450.

The protein belongs to the methylthiotransferase family. MiaB subfamily. In terms of assembly, monomer. It depends on [4Fe-4S] cluster as a cofactor.

The protein resides in the cytoplasm. It carries out the reaction N(6)-dimethylallyladenosine(37) in tRNA + (sulfur carrier)-SH + AH2 + 2 S-adenosyl-L-methionine = 2-methylsulfanyl-N(6)-dimethylallyladenosine(37) in tRNA + (sulfur carrier)-H + 5'-deoxyadenosine + L-methionine + A + S-adenosyl-L-homocysteine + 2 H(+). In terms of biological role, catalyzes the methylthiolation of N6-(dimethylallyl)adenosine (i(6)A), leading to the formation of 2-methylthio-N6-(dimethylallyl)adenosine (ms(2)i(6)A) at position 37 in tRNAs that read codons beginning with uridine. The polypeptide is tRNA-2-methylthio-N(6)-dimethylallyladenosine synthase (Mesorhizobium japonicum (strain LMG 29417 / CECT 9101 / MAFF 303099) (Mesorhizobium loti (strain MAFF 303099))).